The sequence spans 201 residues: MARGEQQRGEGGQRRDRRDRNAPEERVDSDIVEKLVHINRVAATVKGGRRFSFAALMVVGDQKGRVGFGHGKAREVPEAIRKATEEAKKTMIRVPLRESRTLHHDGAGRWGAGKVMMRAAPPGTGVIAGGPMRAVLETLGVQDVVAKSTGSSNPYNMVRATFEALKVQSSPRQIAAKRGKKVGDILGRRADGASAPEAIEG.

The tract at residues 1–28 (MARGEQQRGEGGQRRDRRDRNAPEERVD) is disordered. An S5 DRBM domain is found at 31–94 (IVEKLVHINR…EEAKKTMIRV (64 aa)). Residues 173 to 201 (QIAAKRGKKVGDILGRRADGASAPEAIEG) are disordered. Residues 181–191 (KVGDILGRRAD) are compositionally biased toward basic and acidic residues.

Belongs to the universal ribosomal protein uS5 family. As to quaternary structure, part of the 30S ribosomal subunit. Contacts proteins S4 and S8.

Its function is as follows. With S4 and S12 plays an important role in translational accuracy. In terms of biological role, located at the back of the 30S subunit body where it stabilizes the conformation of the head with respect to the body. The sequence is that of Small ribosomal subunit protein uS5 from Caulobacter vibrioides (strain ATCC 19089 / CIP 103742 / CB 15) (Caulobacter crescentus).